We begin with the raw amino-acid sequence, 91 residues long: Putative 26S proteasome complex subunit sem-1 (91 aa).

Residues 1–73 form a disordered region; the sequence is MASTQPKNDA…SWDDDDTSDD (73 aa). The span at 8–28 shows a compositional bias: basic and acidic residues; the sequence is NDAKSTEPKPEQPVTEKKTAV. Composition is skewed to acidic residues over residues 29–48 and 63–72; these read LEEDDEFEDFPVDDWEAEDT and ESWDDDDTSD.

Belongs to the DSS1/SEM1 family. In terms of assembly, part of the 26S proteasome.

Functionally, subunit of the 26S proteasome which plays a role in ubiquitin-dependent proteolysis. This Neurospora crassa (strain ATCC 24698 / 74-OR23-1A / CBS 708.71 / DSM 1257 / FGSC 987) protein is Putative 26S proteasome complex subunit sem-1 (sem-1).